The sequence spans 89 residues: Small ribosomal subunit protein bS20 (89 aa).

This sequence belongs to the bacterial ribosomal protein bS20 family.

Functionally, binds directly to 16S ribosomal RNA. This chain is Small ribosomal subunit protein bS20, found in Wolbachia pipientis wMel.